The chain runs to 373 residues: Chaperone protein DnaJ (373 aa).

A J domain is found at 4–68 (DYYEILGLTK…VKREQYNQFG (65 aa)). The CR-type zinc finger occupies 142-224 (GKEIVEPLEK…CKGKTHTKTT (83 aa)). Residues C155, C158, C172, C175, C198, C201, C212, and C215 each contribute to the Zn(2+) site. CXXCXGXG motif repeat units follow at residues 155–162 (CNTCNGSG), 172–179 (CTQCSGMG), 198–205 (CSKCNGIG), and 212–219 (CLICKGKT).

Belongs to the DnaJ family. Homodimer. The cofactor is Zn(2+).

Its subcellular location is the cytoplasm. Participates actively in the response to hyperosmotic and heat shock by preventing the aggregation of stress-denatured proteins and by disaggregating proteins, also in an autonomous, DnaK-independent fashion. Unfolded proteins bind initially to DnaJ; upon interaction with the DnaJ-bound protein, DnaK hydrolyzes its bound ATP, resulting in the formation of a stable complex. GrpE releases ADP from DnaK; ATP binding to DnaK triggers the release of the substrate protein, thus completing the reaction cycle. Several rounds of ATP-dependent interactions between DnaJ, DnaK and GrpE are required for fully efficient folding. Also involved, together with DnaK and GrpE, in the DNA replication of plasmids through activation of initiation proteins. The chain is Chaperone protein DnaJ from Mycoplasma mobile (strain ATCC 43663 / 163K / NCTC 11711) (Mesomycoplasma mobile).